A 379-amino-acid chain; its full sequence is MAYKILVVDDSIFFRRRVKEILEQDPSLQVIGEARNGQEAIEMVATLNPDVVTMDVEMPIMDGITAVKKIMARKPVPIIMFSSLTLQGAKATLDALDSGAMDFLPKKFEDIAANRQDAVALLQSRVKSLCRKQHGLRPASVRVAPPKAILFNKPVSRNPAKRSVQATSSIPLGAPLYHSSSSGIPSGKKYRCLAIGTSTGGPVALQKVLTAVPKNFPYPIFIVQHMPGSFTKAFAERLNQLSQLTVKEAMNGEEVKAGVAYLAPGGRQMTVQGDSQRVSFRIYDAPDSADILYKPCVDITFASIAHVYHGDVLGVILTGMGSDGKLGASKLKSKGAKIWVQDELSSVVYGMPQAVMNAGIAEKEFSIDAFESHILKEMA.

The region spanning 4 to 121 (KILVVDDSIF…AANRQDAVAL (118 aa)) is the Response regulatory domain. D55 carries the post-translational modification 4-aspartylphosphate. The region spanning 186 to 379 (SGKKYRCLAI…FESHILKEMA (194 aa)) is the CheB-type methylesterase domain. Active-site residues include S198, H225, and D323.

The protein belongs to the CheB family. In terms of processing, phosphorylated by CheA. Phosphorylation of the N-terminal regulatory domain activates the methylesterase activity.

It is found in the cytoplasm. It carries out the reaction [protein]-L-glutamate 5-O-methyl ester + H2O = L-glutamyl-[protein] + methanol + H(+). The catalysed reaction is L-glutaminyl-[protein] + H2O = L-glutamyl-[protein] + NH4(+). Its function is as follows. Involved in chemotaxis. Part of a chemotaxis signal transduction system that modulates chemotaxis in response to various stimuli. Catalyzes the demethylation of specific methylglutamate residues introduced into the chemoreceptors (methyl-accepting chemotaxis proteins or MCP) by CheR. Also mediates the irreversible deamidation of specific glutamine residues to glutamic acid. This is Protein-glutamate methylesterase/protein-glutamine glutaminase from Pseudoalteromonas atlantica (strain T6c / ATCC BAA-1087).